Consider the following 573-residue polypeptide: Potassium-transporting ATPase potassium-binding subunit (573 aa).

10 helical membrane-spanning segments follow: residues 6 to 26, 66 to 86, 135 to 155, 177 to 197, 257 to 277, 283 to 303, 382 to 402, 428 to 448, 493 to 513, and 537 to 557; these read ILFA…GSYI, FFSL…ILLL, ALAV…IALI, VFWI…FQGV, IQMV…GKWV, GWLI…VMTI, IFGG…LAVF, MFAL…AAVI, ITIA…VIML, and FIFA…TIFP.

Belongs to the KdpA family. The system is composed of three essential subunits: KdpA, KdpB and KdpC.

It is found in the cell inner membrane. In terms of biological role, part of the high-affinity ATP-driven potassium transport (or Kdp) system, which catalyzes the hydrolysis of ATP coupled with the electrogenic transport of potassium into the cytoplasm. This subunit binds the periplasmic potassium ions and delivers the ions to the membrane domain of KdpB through an intramembrane tunnel. This Francisella tularensis subsp. tularensis (strain WY96-3418) protein is Potassium-transporting ATPase potassium-binding subunit.